The following is a 264-amino-acid chain: Thymidylate synthase (264 aa).

Arg-21 provides a ligand contact to dUMP. Residue His-51 coordinates (6R)-5,10-methylene-5,6,7,8-tetrahydrofolate. 126–127 contributes to the dUMP binding site; that stretch reads RR. Cys-146 (nucleophile) is an active-site residue. Residues 166 to 169, Asn-177, and 207 to 209 each bind dUMP; these read RSCD and HLY. A (6R)-5,10-methylene-5,6,7,8-tetrahydrofolate-binding site is contributed by Asp-169. Position 263 (Ala-263) interacts with (6R)-5,10-methylene-5,6,7,8-tetrahydrofolate.

This sequence belongs to the thymidylate synthase family. Bacterial-type ThyA subfamily. As to quaternary structure, homodimer.

It localises to the cytoplasm. The enzyme catalyses dUMP + (6R)-5,10-methylene-5,6,7,8-tetrahydrofolate = 7,8-dihydrofolate + dTMP. It participates in pyrimidine metabolism; dTTP biosynthesis. Catalyzes the reductive methylation of 2'-deoxyuridine-5'-monophosphate (dUMP) to 2'-deoxythymidine-5'-monophosphate (dTMP) while utilizing 5,10-methylenetetrahydrofolate (mTHF) as the methyl donor and reductant in the reaction, yielding dihydrofolate (DHF) as a by-product. This enzymatic reaction provides an intracellular de novo source of dTMP, an essential precursor for DNA biosynthesis. In Shewanella sp. (strain ANA-3), this protein is Thymidylate synthase.